Reading from the N-terminus, the 358-residue chain is Fructose-bisphosphate aldolase 2, cytoplasmic (358 aa).

Arginine 39 contacts substrate. Glutamate 183 (proton acceptor) is an active-site residue. Lysine 225 acts as the Schiff-base intermediate with dihydroxyacetone-P in catalysis. Substrate-binding positions include 266–268 (SGG) and arginine 298.

Belongs to the class I fructose-bisphosphate aldolase family. As to quaternary structure, homotetramer.

It is found in the cytoplasm. Its subcellular location is the cytosol. It carries out the reaction beta-D-fructose 1,6-bisphosphate = D-glyceraldehyde 3-phosphate + dihydroxyacetone phosphate. It functions in the pathway carbohydrate degradation; glycolysis; D-glyceraldehyde 3-phosphate and glycerone phosphate from D-glucose: step 4/4. Fructose-bisphosphate aldolase that plays a key role in glycolysis and gluconeogenesis. The chain is Fructose-bisphosphate aldolase 2, cytoplasmic from Oryza sativa subsp. japonica (Rice).